We begin with the raw amino-acid sequence, 169 residues long: Superoxide dismutase [Cu-Zn] 1 (169 aa).

The N-terminal stretch at 1–18 is a signal peptide; the sequence is MFEQWDALCAVLFSFSIA. Cu cation-binding residues include histidine 65, histidine 67, and histidine 83. An intrachain disulfide couples cysteine 72 to cysteine 165. Residues histidine 83, histidine 91, histidine 100, and aspartate 103 each contribute to the Zn(2+) site. Histidine 145 lines the Cu cation pocket.

The protein belongs to the Cu-Zn superoxide dismutase family. Cu cation serves as cofactor. The cofactor is Zn(2+).

The enzyme catalyses 2 superoxide + 2 H(+) = H2O2 + O2. In terms of biological role, destroys radicals which are normally produced within the cells and which are toxic to biological systems. This Aquifex aeolicus (strain VF5) protein is Superoxide dismutase [Cu-Zn] 1 (sodC1).